The chain runs to 366 residues: Protein RecA (366 aa).

Position 77–84 (77–84) interacts with ATP; sequence GPESSGKT. Residues 346–366 are disordered; sequence IGGPGGEDDDAGGAAGVGDEA.

Belongs to the RecA family.

It localises to the cytoplasm. Its function is as follows. Can catalyze the hydrolysis of ATP in the presence of single-stranded DNA, the ATP-dependent uptake of single-stranded DNA by duplex DNA, and the ATP-dependent hybridization of homologous single-stranded DNAs. It interacts with LexA causing its activation and leading to its autocatalytic cleavage. This is Protein RecA from Rhodospirillum rubrum (strain ATCC 11170 / ATH 1.1.1 / DSM 467 / LMG 4362 / NCIMB 8255 / S1).